The chain runs to 616 residues: Chaperone protein HscA homolog (616 aa).

The protein belongs to the heat shock protein 70 family.

Functionally, chaperone involved in the maturation of iron-sulfur cluster-containing proteins. Has a low intrinsic ATPase activity which is markedly stimulated by HscB. In Vibrio cholerae serotype O1 (strain M66-2), this protein is Chaperone protein HscA homolog.